A 308-amino-acid polypeptide reads, in one-letter code: 1,4-dihydroxy-2-naphthoate octaprenyltransferase (308 aa).

The Cytoplasmic portion of the chain corresponds to 1–20; that stretch reads MTEQQISRTQAWLESLRPKT. A helical transmembrane segment spans residues 21-41; that stretch reads LPLAFAAIIVGTALAWWQGHF. Position 42 (Asp42) is a topological domain, periplasmic. Residues 43 to 63 traverse the membrane as a helical segment; the sequence is PLVALLALITAGLLQILSNLA. Over 64–97 the chain is Cytoplasmic; the sequence is NDYGDAVKGSDKPDRIGPLRGMQKGVITQQEMKR. The chain crosses the membrane as a helical span at residues 98-118; that stretch reads ALIITVVLICLSGLALVAVAC. The Periplasmic portion of the chain corresponds to 119-123; it reads HTLAD. The chain crosses the membrane as a helical span at residues 124-144; sequence FVGFLILGGLSIIAAITYTVG. At 145–148 the chain is on the cytoplasmic side; the sequence is NRPY. The helical transmembrane segment at 149–169 threads the bilayer; it reads GYIGLGDISVLVFFGWLSVMG. The Periplasmic segment spans residues 170 to 176; sequence SWYLQAH. Residues 177 to 197 traverse the membrane as a helical segment; it reads TLIPALILPATACGLLATAVL. Topologically, residues 198–227 are cytoplasmic; sequence NINNLRDINSDRENGKNTLVVRLGEVNARR. Residues 228 to 247 traverse the membrane as a helical segment; the sequence is YHACLLMGSLVCLALFNLFS. The Periplasmic segment spans residues 248–250; it reads LHS. The chain crosses the membrane as a helical span at residues 251 to 270; it reads LWGWLFLLAAPLLVKQARYV. Residues 271–286 lie on the Cytoplasmic side of the membrane; that stretch reads MREMDPVAMRPMLERT. Residues 287–307 form a helical membrane-spanning segment; sequence VKGALLTNLLFVLGIFLSQWA. Position 308 (Ala308) is a topological domain, periplasmic.

The protein belongs to the MenA family. Type 1 subfamily.

Its subcellular location is the cell inner membrane. It catalyses the reaction an all-trans-polyprenyl diphosphate + 1,4-dihydroxy-2-naphthoate + H(+) = a 2-demethylmenaquinol + CO2 + diphosphate. It participates in quinol/quinone metabolism; menaquinone biosynthesis; menaquinol from 1,4-dihydroxy-2-naphthoate: step 1/2. Its function is as follows. Conversion of 1,4-dihydroxy-2-naphthoate (DHNA) to demethylmenaquinone (DMK). Attaches octaprenylpyrophosphate, a membrane-bound 40-carbon side chain to DHNA. The conversion of DHNA to DMK proceeds in three stages: the removal of the carboxyl group of DHNA as CO(2), the attachment of the isoprenoid side chain, and a quinol-to-quinone oxidation, which is thought to be spontaneous. The protein is 1,4-dihydroxy-2-naphthoate octaprenyltransferase of Escherichia coli (strain K12).